Reading from the N-terminus, the 234-residue chain is Carboxy-S-adenosyl-L-methionine synthase (234 aa).

S-adenosyl-L-methionine is bound by residues Y35, 60–62 (GCS), 83–84 (DN), 109–110 (DI), N124, and R191.

The protein belongs to the class I-like SAM-binding methyltransferase superfamily. Cx-SAM synthase family. Homodimer.

It catalyses the reaction prephenate + S-adenosyl-L-methionine = carboxy-S-adenosyl-L-methionine + 3-phenylpyruvate + H2O. Functionally, catalyzes the conversion of S-adenosyl-L-methionine (SAM) to carboxy-S-adenosyl-L-methionine (Cx-SAM). In Campylobacter concisus (strain 13826), this protein is Carboxy-S-adenosyl-L-methionine synthase.